Reading from the N-terminus, the 124-residue chain is Photoactive yellow protein (124 aa).

Positions 22–85 constitute a PAS domain; sequence AEYLPFGAVL…GEFLRFHQTG (64 aa). Cys68 carries the post-translational modification S-(4-hydroxycinnamyl)cysteine.

The protein belongs to the photoactive yellow protein family. The 4-hydroxycinnamic acid (p-coumaric acid) chromophore is covalently bound via a thioester linkage.

This photoactive protein is a photoreceptor with kinetics similar to that of rhodopsin. This Cereibacter sphaeroides (strain ATCC 17023 / DSM 158 / JCM 6121 / CCUG 31486 / LMG 2827 / NBRC 12203 / NCIMB 8253 / ATH 2.4.1.) (Rhodobacter sphaeroides) protein is Photoactive yellow protein (pyp).